An 865-amino-acid polypeptide reads, in one-letter code: MITTKELRNKFINYFESKNHSHQPSSSLIPFGDDTLLFTNAGMVQFKDVFLGIEKKDFSRAVTVQKCLRAGGKHNDLDNVGYTARHHTFFEMLGNFSFGDYFKKDAISFAWEFLTKEIKLPIEKLWVTIYASDDEAFDVWHKHIGLAKERIIRIDSSDNFWSMGDTGPCGPCTEIFYDHGEDVAGGLPGTPEQDGDRYIEIWNIVFMQYNRHADGSTTDLPKPSVDTGMGLERISAVLQNVHSNYEIDLFQALIKKAQQVTHAKDINSPSLKVIADHIRACAFLIADGVLPANEGRGYVLRRIIRRAIRHGNKVGAKEIFFYKLVAELVNQMGEAYSQLIDKRELIEKTLIKEEELFLKTIENGIKIFDAEIENLKDNTISGEVAFKLYDTYGFPFDLTADMAREKGLKVDEQAFLAQMQIQKQRSKEAGKFNVDYNSLINSQVKSEFRGYSTLIEDAKVLEIYQDGQLVASTSEQVPAVVVLDKTPFYAESGGQVGDKGILEGVGFEFVVEDVQKSGEAILHIGKLVKGRLNLNDELTARVSDQPRLATAANHSATHLLHKALKLVLGGHAEQKGSLVDENRLRFDFTHDKAISRSEIEQIELLVNQQIRANYPVTTIETSQQKAKSLGAEALFGEKYGDIVRVISMGDFSIELCGGTHVAYTGDIGLFKIISEGGIASGVRRIEAVTADKAIRHTFTNENKIIAIKDSLKANDANLIDKIKSMLEQIKNQEKQIAKLKKELLSGSSNDIKETNIGDIKVVVANVDGVDVKTLRDKIDDYKSKNTKVIAVLTTTNADKVQFVIGVSNAITTLIKAGDIAKELSSHIDGKGGGRADMAQGGGNNSANIDQALSQVEKFILNNIKE.

His-554, His-558, Cys-656, and His-660 together coordinate Zn(2+).

It belongs to the class-II aminoacyl-tRNA synthetase family. Zn(2+) is required as a cofactor.

The protein resides in the cytoplasm. It carries out the reaction tRNA(Ala) + L-alanine + ATP = L-alanyl-tRNA(Ala) + AMP + diphosphate. In terms of biological role, catalyzes the attachment of alanine to tRNA(Ala) in a two-step reaction: alanine is first activated by ATP to form Ala-AMP and then transferred to the acceptor end of tRNA(Ala). Also edits incorrectly charged Ser-tRNA(Ala) and Gly-tRNA(Ala) via its editing domain. The chain is Alanine--tRNA ligase from Francisella tularensis subsp. novicida (strain U112).